The sequence spans 183 residues: Ras-related protein Rap-2a (183 aa).

10–17 (GSGGVGKS) contacts GTP. The short motif at 32 to 40 (YDPTIEDFY) is the Effector region element. GTP contacts are provided by residues 57 to 61 (DTAGT) and 116 to 119 (NKVD). Residues Cys176 and Cys177 are each lipidated (S-palmitoyl cysteine). Position 180 is a cysteine methyl ester (Cys180). A lipid anchor (S-farnesyl cysteine) is attached at Cys180. Positions 181–183 (NIQ) are cleaved as a propeptide — removed in mature form.

This sequence belongs to the small GTPase superfamily. Ras family. As to quaternary structure, interacts with PLCE1. Interacts with ARHGAP29, SGSM1, SGSM2 and SGSM3. Interacts (GTP-bound form preferentially) with MAP4K4. Interacts with MINK1. Interacts with cytoskeletal actin. Interacts (GTP-bound form) with RUNDC3A. Interacts (GTP-bound form preferentially) with TNIK (via the CNH domain); the interaction is direct and recruits RAP2A to the E3 ubiquitin ligase NEDD4. Interacts with RGS14; the interaction is GTP-dependent. In terms of processing, ubiquitinated; undergoes 'Lys-63' monoubiquitination and diubiquitination by NEDD4. Multiple lysine residues are probably modified. Ubiquitination requires TNIK, prevents interaction with effectors and inactivates RAP2A. Ubiquitination by the ECS(RAB40B) complex leads to RAP2A localization to lamellipodia plasma membrane, activation, and regulation of sorting at early endosomes for recycling to the lamellipodia plasma membrane. Post-translationally, palmitoylated. Palmitoylation is required for association with recycling endosome membranes and activation of TNIK. As to expression, expressed in granular layer of the cerebellum, forebrain, striatum, layer V of the cortex, olfactory cortex, tubercules, subthalamic and hippocampus, particularly in the CA2 region, to a lesser extent in the CA1 region and the external layer of the dentate gyrus. Expressed in neurons.

The protein resides in the midbody. It localises to the cell projection. Its subcellular location is the lamellipodium membrane. The protein localises to the golgi apparatus. It is found in the recycling endosome membrane. The protein resides in the lysosome. It carries out the reaction GTP + H2O = GDP + phosphate + H(+). Its activity is regulated as follows. Activated by the guanine nucleotide-exchange factors RAPGEF3 and RAPGEF4 in a cAMP-dependent manner. Nucleotide exchange is also specifically stimulated by RAPGEF5, RASGEF1A and RASGEF1B. Its function is as follows. Small GTP-binding protein which cycles between a GDP-bound inactive and a GTP-bound active form. In its active form interacts with and regulates several effectors including MAP4K4, MINK1 and TNIK. Part of a signaling complex composed of NEDD4, RAP2A and TNIK which regulates neuronal dendrite extension and arborization during development. More generally, it is part of several signaling cascades and may regulate cytoskeletal rearrangements, cell migration, cell adhesion and cell spreading. In Mus musculus (Mouse), this protein is Ras-related protein Rap-2a.